A 248-amino-acid chain; its full sequence is ATP synthase subunit a (248 aa).

Residues 1-3 (MLY) constitute a propeptide, removed in mature form. Transmembrane regions (helical) follow at residues 24-44 (MSLTNSSLYFIIAAIISFFIF), 86-106 (IYMPLIFSLFIIILVSNLVGL), 117-137 (FALPLGLSVTIIISVTVIGFV), 146-166 (VLLPSGTPLGLVPLLLVVELL), 183-203 (ITSGHILLNIISGFLFKTSGI), 205-225 (LLFVIIPFTLFIALTGLELIV), and 227-247 (ILQAYVWSILTCIYIKDSLIL).

The protein belongs to the ATPase A chain family. F-type ATPases have 2 components, CF(1) - the catalytic core - and CF(0) - the membrane proton channel. CF(1) has five subunits: alpha(3), beta(3), gamma(1), delta(1), epsilon(1). CF(0) has three main subunits: a, b and c.

The protein localises to the mitochondrion inner membrane. Its function is as follows. Mitochondrial membrane ATP synthase (F(1)F(0) ATP synthase or Complex V) produces ATP from ADP in the presence of a proton gradient across the membrane which is generated by electron transport complexes of the respiratory chain. F-type ATPases consist of two structural domains, F(1) - containing the extramembraneous catalytic core and F(0) - containing the membrane proton channel, linked together by a central stalk and a peripheral stalk. During catalysis, ATP synthesis in the catalytic domain of F(1) is coupled via a rotary mechanism of the central stalk subunits to proton translocation. Key component of the proton channel; it may play a direct role in the translocation of protons across the membrane. This chain is ATP synthase subunit a, found in Zancudomyces culisetae (Gut fungus).